The sequence spans 610 residues: Peptidyl-prolyl cis-trans isomerase 9 (610 aa).

Phosphoserine is present on Ser13. 3 WD repeats span residues 45-83, 88-127, and 177-216; these read MHNA…VEYI, AHNA…LVNI, and KHTA…QKPD. Residues 453–607 enclose the PPIase cyclophilin-type domain; it reads LGKAAIIHTT…EPTKIINISI (155 aa).

This sequence belongs to the cyclophilin-type PPIase family.

The protein resides in the nucleus. It carries out the reaction [protein]-peptidylproline (omega=180) = [protein]-peptidylproline (omega=0). Its function is as follows. PPIases accelerate the folding of proteins. It catalyzes the cis-trans isomerization of proline imidic peptide bonds in oligopeptides. This chain is Peptidyl-prolyl cis-trans isomerase 9 (cyp9), found in Schizosaccharomyces pombe (strain 972 / ATCC 24843) (Fission yeast).